The primary structure comprises 336 residues: tRNA N6-adenosine threonylcarbamoyltransferase (336 aa).

The Fe cation site is built by His114 and His118. Residues 136–140 (LVSGG), Asp169, Gly182, Asp186, and Asn275 contribute to the substrate site. Asp301 contributes to the Fe cation binding site.

It belongs to the KAE1 / TsaD family. Requires Fe(2+) as cofactor.

It is found in the cytoplasm. It catalyses the reaction L-threonylcarbamoyladenylate + adenosine(37) in tRNA = N(6)-L-threonylcarbamoyladenosine(37) in tRNA + AMP + H(+). In terms of biological role, required for the formation of a threonylcarbamoyl group on adenosine at position 37 (t(6)A37) in tRNAs that read codons beginning with adenine. Is involved in the transfer of the threonylcarbamoyl moiety of threonylcarbamoyl-AMP (TC-AMP) to the N6 group of A37, together with TsaE and TsaB. TsaD likely plays a direct catalytic role in this reaction. The polypeptide is tRNA N6-adenosine threonylcarbamoyltransferase (Streptococcus pneumoniae (strain Taiwan19F-14)).